The primary structure comprises 318 residues: Curved DNA-binding protein (318 aa).

The 65-residue stretch at 5-69 (DYYKILGVEP…QKRAEFDEIR (65 aa)) folds into the J domain. A disordered region spans residues 111-130 (GGGNPFGGARQQQRSAGRRG).

Its subcellular location is the cytoplasm. It localises to the nucleoid. Functionally, DNA-binding protein that preferentially recognizes a curved DNA sequence. It is probably a functional analog of DnaJ; displays overlapping activities with DnaJ, but functions under different conditions, probably acting as a molecular chaperone in an adaptive response to environmental stresses other than heat shock. Lacks autonomous chaperone activity; binds native substrates and targets them for recognition by DnaK. Its activity is inhibited by the binding of CbpM. The protein is Curved DNA-binding protein of Pseudomonas putida (strain GB-1).